The following is a 225-amino-acid chain: Uridylate kinase (225 aa).

Residue 9-10 (GS) coordinates ATP. A UMP-binding site is contributed by Gly44. Residues Gly45 and Arg49 each coordinate ATP. UMP is bound by residues Asp66 and 114–120 (THPGHTT). 4 residues coordinate ATP: Thr140, Asn141, Tyr146, and Asp149.

It belongs to the UMP kinase family. Homohexamer.

The protein resides in the cytoplasm. It catalyses the reaction UMP + ATP = UDP + ADP. Its pathway is pyrimidine metabolism; CTP biosynthesis via de novo pathway; UDP from UMP (UMPK route): step 1/1. Inhibited by UTP. Catalyzes the reversible phosphorylation of UMP to UDP. This is Uridylate kinase from Thermococcus sibiricus (strain DSM 12597 / MM 739).